We begin with the raw amino-acid sequence, 227 residues long: Cytidylate kinase (227 aa).

12-20 (GPSGAGKGT) serves as a coordination point for ATP.

It belongs to the cytidylate kinase family. Type 1 subfamily.

Its subcellular location is the cytoplasm. The catalysed reaction is CMP + ATP = CDP + ADP. It carries out the reaction dCMP + ATP = dCDP + ADP. The protein is Cytidylate kinase of Sodalis glossinidius (strain morsitans).